The primary structure comprises 384 residues: 23S rRNA (uracil(747)-C(5))-methyltransferase RlmC (384 aa).

Residues Cys3, Cys11, Cys14, and Cys87 each contribute to the [4Fe-4S] cluster site. 4 residues coordinate S-adenosyl-L-methionine: Gln212, Phe241, Glu262, and Asn309. The active-site Nucleophile is Cys336.

Belongs to the class I-like SAM-binding methyltransferase superfamily. RNA M5U methyltransferase family. RlmC subfamily.

The catalysed reaction is uridine(747) in 23S rRNA + S-adenosyl-L-methionine = 5-methyluridine(747) in 23S rRNA + S-adenosyl-L-homocysteine + H(+). Functionally, catalyzes the formation of 5-methyl-uridine at position 747 (m5U747) in 23S rRNA. The sequence is that of 23S rRNA (uracil(747)-C(5))-methyltransferase RlmC from Shewanella amazonensis (strain ATCC BAA-1098 / SB2B).